A 288-amino-acid polypeptide reads, in one-letter code: Putative sugar uptake protein gbs2116 (288 aa).

10 helical membrane-spanning segments follow: residues 4-26 (LLIA…KIGG), 33-50 (FGMT…WLFK), 55-72 (TASL…WSVG), 85-107 (VSVA…GALV), 117-134 (FILG…FYFS), 154-171 (FATI…AVLF), 181-200 (AVIL…FMKF), 207-229 (VVVK…LLAA), 234-256 (LAIA…ILFL), and 268-285 (VVMG…LGIV).

It belongs to the GRP transporter (TC 2.A.7.5) family.

Its subcellular location is the cell membrane. This is Putative sugar uptake protein gbs2116 from Streptococcus agalactiae serotype III (strain NEM316).